The following is an 879-amino-acid chain: Alanine--tRNA ligase (879 aa).

Positions 566, 570, 668, and 672 each coordinate Zn(2+).

It belongs to the class-II aminoacyl-tRNA synthetase family. The cofactor is Zn(2+).

The protein localises to the cytoplasm. The enzyme catalyses tRNA(Ala) + L-alanine + ATP = L-alanyl-tRNA(Ala) + AMP + diphosphate. Its function is as follows. Catalyzes the attachment of alanine to tRNA(Ala) in a two-step reaction: alanine is first activated by ATP to form Ala-AMP and then transferred to the acceptor end of tRNA(Ala). Also edits incorrectly charged Ser-tRNA(Ala) and Gly-tRNA(Ala) via its editing domain. The protein is Alanine--tRNA ligase of Clostridium botulinum (strain Hall / ATCC 3502 / NCTC 13319 / Type A).